The sequence spans 179 residues: MSGEPGTDIAEVIRSLMREVPDFPEPGVHFKDLTPVLADAYGLAEVSRAIADSARGADLVAGVDARGFLLGGAVAVTLGIGVLAVRKGGKLPPPVLGETYTLEYGSATLEVPADGVELAGRSVVVIDDVLATGGTLAAAHQLLTKAGANVTGAVVMMELTALGGRAAVDPLEVTSLYSV.

Belongs to the purine/pyrimidine phosphoribosyltransferase family. As to quaternary structure, homodimer.

The protein localises to the cytoplasm. It catalyses the reaction AMP + diphosphate = 5-phospho-alpha-D-ribose 1-diphosphate + adenine. Its pathway is purine metabolism; AMP biosynthesis via salvage pathway; AMP from adenine: step 1/1. Its function is as follows. Catalyzes a salvage reaction resulting in the formation of AMP, that is energically less costly than de novo synthesis. The sequence is that of Adenine phosphoribosyltransferase from Mycolicibacterium gilvum (strain PYR-GCK) (Mycobacterium gilvum (strain PYR-GCK)).